The primary structure comprises 248 residues: Small ribosomal subunit protein uS3 (248 aa).

In terms of domain architecture, KH type-2 spans 39 to 113 (IRAYLTKQLS…TIRINVVEVT (75 aa)). Residues 218 to 248 (ERPEQKVPLQQPKRRQQRRRPTFEDRSAVEA) are disordered. Positions 238 to 248 (PTFEDRSAVEA) are enriched in basic and acidic residues.

It belongs to the universal ribosomal protein uS3 family. As to quaternary structure, part of the 30S ribosomal subunit. Forms a tight complex with proteins S10 and S14.

Binds the lower part of the 30S subunit head. Binds mRNA in the 70S ribosome, positioning it for translation. The protein is Small ribosomal subunit protein uS3 of Synechococcus sp. (strain JA-3-3Ab) (Cyanobacteria bacterium Yellowstone A-Prime).